Consider the following 430-residue polypeptide: Adenylosuccinate synthetase (430 aa).

Residues 12–18 (GDEGKGK) and 40–42 (GHT) each bind GTP. Asp13 functions as the Proton acceptor in the catalytic mechanism. Mg(2+)-binding residues include Asp13 and Gly40. IMP contacts are provided by residues 13–16 (DEGK), 38–41 (NAGH), Thr128, Arg142, Gln223, Thr238, and Arg302. The active-site Proton donor is the His41. 298–304 (TTTGRPR) contacts substrate. Residues Arg304, 330–332 (SID), and 412–414 (SVG) contribute to the GTP site.

The protein belongs to the adenylosuccinate synthetase family. Homodimer. Mg(2+) serves as cofactor.

It localises to the cytoplasm. It catalyses the reaction IMP + L-aspartate + GTP = N(6)-(1,2-dicarboxyethyl)-AMP + GDP + phosphate + 2 H(+). It functions in the pathway purine metabolism; AMP biosynthesis via de novo pathway; AMP from IMP: step 1/2. Functionally, plays an important role in the de novo pathway of purine nucleotide biosynthesis. Catalyzes the first committed step in the biosynthesis of AMP from IMP. In Streptococcus pyogenes serotype M1, this protein is Adenylosuccinate synthetase.